Here is a 202-residue protein sequence, read N- to C-terminus: HTH-type transcriptional regulator BetI (202 aa).

The HTH tetR-type domain occupies 8–68 (PIRRRQLIDA…ATMRDITRQL (61 aa)). Positions 31-50 (TIAQIARRAGVSAGIISHYF) form a DNA-binding region, H-T-H motif.

It functions in the pathway amine and polyamine biosynthesis; betaine biosynthesis via choline pathway [regulation]. Its function is as follows. Repressor involved in the biosynthesis of the osmoprotectant glycine betaine. It represses transcription of the choline transporter BetT and the genes of BetAB involved in the synthesis of glycine betaine. The polypeptide is HTH-type transcriptional regulator BetI (Cronobacter sakazakii (strain ATCC BAA-894) (Enterobacter sakazakii)).